A 501-amino-acid polypeptide reads, in one-letter code: Putative zinc metalloprotease TM_0890 (501 aa).

His-17 lines the Zn(2+) pocket. Glu-18 is an active-site residue. His-21 is a binding site for Zn(2+). 4 helical membrane-spanning segments follow: residues 93–115 (FLIT…LPIT), 401–420 (VQTG…SAAS), 427–449 (VLTV…LPAL), and 474–496 (IIHF…LDIG). One can recognise a PDZ domain in the interval 96-180 (TLAGPLFSIL…LVIIRNGEKK (85 aa)).

This sequence belongs to the peptidase M50B family. Zn(2+) is required as a cofactor.

The protein resides in the cell inner membrane. The polypeptide is Putative zinc metalloprotease TM_0890 (Thermotoga maritima (strain ATCC 43589 / DSM 3109 / JCM 10099 / NBRC 100826 / MSB8)).